A 64-amino-acid polypeptide reads, in one-letter code: MPKLKTHSGAAKRFKKTATGKVKRSKAFKRHILTSKSTKKKRHFDMEGLVSKADTPKIKRMIPY.

Residues 1–25 form a disordered region; it reads MPKLKTHSGAAKRFKKTATGKVKRS.

The protein belongs to the bacterial ribosomal protein bL35 family.

This Koribacter versatilis (strain Ellin345) protein is Large ribosomal subunit protein bL35.